The primary structure comprises 131 residues: MSMSDPIADLLTRIRNAQMVSKTTVTAPSSKVKVAIAQVLKDEGYIDGFQVKTDAGKSELEITLKYYAGRPVIERIERVSRPGLRVYKGRDAIPQVMNGMGVAIVTTPKGVMTDRKARATGVGGEVLCYVA.

The protein belongs to the universal ribosomal protein uS8 family. In terms of assembly, part of the 30S ribosomal subunit. Contacts proteins S5 and S12.

One of the primary rRNA binding proteins, it binds directly to 16S rRNA central domain where it helps coordinate assembly of the platform of the 30S subunit. The protein is Small ribosomal subunit protein uS8 of Delftia acidovorans (strain DSM 14801 / SPH-1).